Reading from the N-terminus, the 143-residue chain is Flagellar assembly factor FliW (143 aa).

Belongs to the FliW family. Interacts with translational regulator CsrA and flagellin(s).

It localises to the cytoplasm. In terms of biological role, acts as an anti-CsrA protein, binds CsrA and prevents it from repressing translation of its target genes, one of which is flagellin. Binds to flagellin and participates in the assembly of the flagellum. This Bacillus licheniformis (strain ATCC 14580 / DSM 13 / JCM 2505 / CCUG 7422 / NBRC 12200 / NCIMB 9375 / NCTC 10341 / NRRL NRS-1264 / Gibson 46) protein is Flagellar assembly factor FliW.